The chain runs to 176 residues: Peroxynitrite isomerase 1 (176 aa).

The segment at 1–23 (MDENSTLSPAHSDAAASSSANTP) is disordered. Over residues 8–20 (SPAHSDAAASSSA) the composition is skewed to low complexity. Residues 37-43 (GLWRGEG) carry the GXWXGXG motif. H168 serves as a coordination point for heme b.

The protein belongs to the nitrobindin family. As to quaternary structure, homodimer. The cofactor is heme b.

The catalysed reaction is peroxynitrite = nitrate. It participates in nitrogen metabolism. Heme-binding protein able to scavenge peroxynitrite and to protect free L-tyrosine against peroxynitrite-mediated nitration, by acting as a peroxynitrite isomerase that converts peroxynitrite to nitrate. Therefore, this protein likely plays a role in peroxynitrite sensing and in the detoxification of reactive nitrogen and oxygen species (RNS and ROS, respectively). Is able to bind nitric oxide (NO) in vitro, but may act as a sensor of peroxynitrite levels in vivo. The protein is Peroxynitrite isomerase 1 of Rhodococcus jostii (strain RHA1).